A 157-amino-acid chain; its full sequence is 2-C-methyl-D-erythritol 2,4-cyclodiphosphate synthase (157 aa).

A divalent metal cation-binding residues include Asp-8 and His-10. 4-CDP-2-C-methyl-D-erythritol 2-phosphate contacts are provided by residues 8–10 and 34–35; these read DVH and HS. His-42 provides a ligand contact to a divalent metal cation. 4-CDP-2-C-methyl-D-erythritol 2-phosphate contacts are provided by residues 56 to 58, 61 to 65, 100 to 106, 132 to 135, Phe-139, and Arg-142; these read DIG, FPDTD, AQAPKMA, and TTTE.

The protein belongs to the IspF family. Homotrimer. A divalent metal cation serves as cofactor.

The enzyme catalyses 4-CDP-2-C-methyl-D-erythritol 2-phosphate = 2-C-methyl-D-erythritol 2,4-cyclic diphosphate + CMP. It functions in the pathway isoprenoid biosynthesis; isopentenyl diphosphate biosynthesis via DXP pathway; isopentenyl diphosphate from 1-deoxy-D-xylulose 5-phosphate: step 4/6. Involved in the biosynthesis of isopentenyl diphosphate (IPP) and dimethylallyl diphosphate (DMAPP), two major building blocks of isoprenoid compounds. Catalyzes the conversion of 4-diphosphocytidyl-2-C-methyl-D-erythritol 2-phosphate (CDP-ME2P) to 2-C-methyl-D-erythritol 2,4-cyclodiphosphate (ME-CPP) with a corresponding release of cytidine 5-monophosphate (CMP). In Serratia proteamaculans (strain 568), this protein is 2-C-methyl-D-erythritol 2,4-cyclodiphosphate synthase.